The primary structure comprises 180 residues: NADH-quinone oxidoreductase subunit I (180 aa).

2 consecutive 4Fe-4S ferredoxin-type domains span residues 50–80 and 90–119; these read LTRD…LQKA and EFFR…LTPD. [4Fe-4S] cluster contacts are provided by C60, C63, C66, C70, C99, C102, C105, and C109.

Belongs to the complex I 23 kDa subunit family. As to quaternary structure, NDH-1 is composed of 13 different subunits. Subunits NuoA, H, J, K, L, M, N constitute the membrane sector of the complex. Requires [4Fe-4S] cluster as cofactor.

It is found in the cell inner membrane. It catalyses the reaction a quinone + NADH + 5 H(+)(in) = a quinol + NAD(+) + 4 H(+)(out). Its function is as follows. NDH-1 shuttles electrons from NADH, via FMN and iron-sulfur (Fe-S) centers, to quinones in the respiratory chain. The immediate electron acceptor for the enzyme in this species is believed to be ubiquinone. Couples the redox reaction to proton translocation (for every two electrons transferred, four hydrogen ions are translocated across the cytoplasmic membrane), and thus conserves the redox energy in a proton gradient. This chain is NADH-quinone oxidoreductase subunit I, found in Yersinia enterocolitica serotype O:8 / biotype 1B (strain NCTC 13174 / 8081).